Reading from the N-terminus, the 320-residue chain is Transcription factor MYB80 (320 aa).

2 consecutive HTH myb-type domains span residues 9-65 and 66-116; these read KENV…RPDL and KHGQ…KKKL. DNA-binding regions (H-T-H motif) lie at residues 37-61 and 89-112; these read WRLI…TNYL and WSLI…NTKL. The segment at 257 to 283 is disordered; that stretch reads TAAAEEEERRKLKGEVVDQEEIGSEGG. Residues 263-272 are compositionally biased toward basic and acidic residues; the sequence is EERRKLKGEV.

In terms of tissue distribution, expressed in the tapetum and middle layer of developing anthers. Expressed in trichomes.

Its subcellular location is the nucleus. In terms of biological role, transcription factor that binds to the DNA sequence 5'-CCAACC-3'. Regulates directly PME5, UND and GLOX1. Essential for tapetum development in anthers and microsporogenesis. Regulates the timing of tapetal programmed cell death (PCD) which is critical for pollen development. May act through the activation of UND, encoding an A1 aspartic protease. Required for anther development by regulating tapetum development, callose dissolution and exine formation. Acts upstream of A6 and FAR2/MS2, two genes required for pollen exine formation. Negatively regulates trichome endoreduplication and trichome branching. The sequence is that of Transcription factor MYB80 from Arabidopsis thaliana (Mouse-ear cress).